Consider the following 87-residue polypeptide: Small ribosomal subunit protein uS15 (87 aa).

This sequence belongs to the universal ribosomal protein uS15 family. In terms of assembly, part of the 30S ribosomal subunit. Forms a bridge to the 50S subunit in the 70S ribosome, contacting the 23S rRNA.

Its function is as follows. One of the primary rRNA binding proteins, it binds directly to 16S rRNA where it helps nucleate assembly of the platform of the 30S subunit by binding and bridging several RNA helices of the 16S rRNA. Forms an intersubunit bridge (bridge B4) with the 23S rRNA of the 50S subunit in the ribosome. The sequence is that of Small ribosomal subunit protein uS15 from Pseudothermotoga lettingae (strain ATCC BAA-301 / DSM 14385 / NBRC 107922 / TMO) (Thermotoga lettingae).